Reading from the N-terminus, the 297-residue chain is 4-hydroxybenzoate octaprenyltransferase (297 aa).

The next 9 helical transmembrane spans lie at isoleucine 29 to valine 49, leucine 55 to phenylalanine 75, alanine 102 to alanine 122, threonine 124 to methionine 141, phenylalanine 146 to alanine 166, glycine 169 to tyrosine 189, valine 219 to phenylalanine 239, leucine 241 to tryptophan 261, and valine 270 to valine 290.

Belongs to the UbiA prenyltransferase family. Mg(2+) serves as cofactor.

The protein localises to the cell inner membrane. The enzyme catalyses all-trans-octaprenyl diphosphate + 4-hydroxybenzoate = 4-hydroxy-3-(all-trans-octaprenyl)benzoate + diphosphate. The protein operates within cofactor biosynthesis; ubiquinone biosynthesis. Catalyzes the prenylation of para-hydroxybenzoate (PHB) with an all-trans polyprenyl group. Mediates the second step in the final reaction sequence of ubiquinone-8 (UQ-8) biosynthesis, which is the condensation of the polyisoprenoid side chain with PHB, generating the first membrane-bound Q intermediate 3-octaprenyl-4-hydroxybenzoate. The polypeptide is 4-hydroxybenzoate octaprenyltransferase (Stutzerimonas stutzeri (strain A1501) (Pseudomonas stutzeri)).